We begin with the raw amino-acid sequence, 402 residues long: Aminotransferase-like protein FGM3 (402 aa).

Residues 137 to 138 (TI), aspartate 218, and 282 to 283 (FG) each bind pyridoxal 5'-phosphate.

Belongs to the class-V pyridoxal-phosphate-dependent aminotransferase family. Csd subfamily.

Aminotransferase-like protein; part of the Fg3_54/C64 gene cluster that mediates the biosynthesis of the octapeptide fusaoctaxin A, a virulence factor that is required for cell-to-cell invasiveness of plant host. The 2 nonribosomal peptide synthetases NRPS9 and NRPS5 form an assembly line which likely utilizes GABA as a starter unit (loaded on the unique module M1 of NRPS9) and sequentially incorporates seven extender units composed of the residues L-Ala, L-allo-Ile, L-Ser, L-Val, L-Ser, L-Leu and L-Leu, respectively. During the process, each of the residues that are tethered on modules M3-M7 of NRPS5 containing an E domain can undergo an epimerization reaction to produce a D-configuration before the transpeptidation reaction occurs. The elongation of the peptidyl chain might be terminated by module M8-mediated L-Leu incorporation, followed by R domain-catalyzed 4 electron reduction to release the resulting octapeptide from the assembly line as an alcohol. Fusaoctaxin A is cleaved by the cluster specific ABC transporter FGM5 to the pentapeptide fusapentaxin A and the tripeptide fusatrixin A. The other enzymes from the cluster, FGM1, FGM2, FGM3 and FGM9 seem not to be involved in the biosynthesis of fusaoctaxin A and their functions have still to be determined. The polypeptide is Aminotransferase-like protein FGM3 (Gibberella zeae (strain ATCC MYA-4620 / CBS 123657 / FGSC 9075 / NRRL 31084 / PH-1) (Wheat head blight fungus)).